The following is a 112-amino-acid chain: Putative pterin-4-alpha-carbinolamine dehydratase (112 aa).

The protein belongs to the pterin-4-alpha-carbinolamine dehydratase family.

It carries out the reaction (4aS,6R)-4a-hydroxy-L-erythro-5,6,7,8-tetrahydrobiopterin = (6R)-L-erythro-6,7-dihydrobiopterin + H2O. In Vibrio campbellii (strain ATCC BAA-1116), this protein is Putative pterin-4-alpha-carbinolamine dehydratase.